We begin with the raw amino-acid sequence, 476 residues long: Proton-coupled amino acid transporter 1 (476 aa).

A compositionally biased stretch (basic and acidic residues) spans 1–15 (MSTQRLRNEDYHDYS). Positions 1 to 32 (MSTQRLRNEDYHDYSSTDVSPEESPSEGLNNL) are disordered. Residues 1-51 (MSTQRLRNEDYHDYSSTDVSPEESPSEGLNNLSSPGSYQRFGQSNSTTWFQ) are Cytoplasmic-facing. The chain crosses the membrane as a helical span at residues 52–72 (TLIHLLKGNIGTGLLGLPLAV). Over 73-78 (KNAGIV) the chain is Extracellular. The chain crosses the membrane as a helical span at residues 79-99 (MGPISLLIIGIVAVHCMGILV). At 100-141 (KCAHHFCRRLNKSFVDYGDTVMYGLESSPCSWLRNHAHWGRR) the chain is on the cytoplasmic side. The helical transmembrane segment at 142–162 (VVDFFLIVTQLGFCCVYFVFL) threads the bilayer. Topologically, residues 163–190 (ADNFKQVIEAANGTTNNCHNNETVILTP) are extracellular. Residues Asn174 and Asn183 are each glycosylated (N-linked (GlcNAc...) asparagine). Cys180 and Cys329 form a disulfide bridge. A helical membrane pass occupies residues 191 to 211 (TMDSRLYMLSFLPFLVLLVFI). Residues 212-215 (RNLR) lie on the Cytoplasmic side of the membrane. Residues 216–236 (ALSIFSLLANITMLVSLVMIY) form a helical membrane-spanning segment. Residues 237 to 257 (QFIVQRIPDPSHLPLVAPWKT) lie on the Extracellular side of the membrane. The helical transmembrane segment at 258–278 (YPLFFGTAIFSFEGIGMVLPL) threads the bilayer. At 279 to 289 (ENKMKDPRKFP) the chain is on the cytoplasmic side. A helical transmembrane segment spans residues 290–310 (LILYLGMVIVTILYISLGCLG). At 311-342 (YLQFGANIQGSITLNLPNCWLYQSVKLLYSIG) the chain is on the extracellular side. A helical transmembrane segment spans residues 343–363 (IFFTYALQFYVPAEIIIPFFV). At 364–372 (SRAPEHCEL) the chain is on the cytoplasmic side. The helical transmembrane segment at 373-393 (VVDLFVRTVLVCLTCILAILI) threads the bilayer. The Extracellular segment spans residues 394–397 (PRLD). The chain crosses the membrane as a helical span at residues 398–418 (LVISLVGSVSSSALALIIPPL). Residues 419–439 (LEVTTFYSEGMSPLTIFKDAL) lie on the Cytoplasmic side of the membrane. The helical transmembrane segment at 440 to 460 (ISILGFVGFVVGTYEALYELI) threads the bilayer. At 461-476 (QPSNAPIFINSTCAFI) the chain is on the extracellular side. The N-linked (GlcNAc...) asparagine glycan is linked to Asn470.

This sequence belongs to the amino acid/polyamine transporter 2 family.

It is found in the cell membrane. It localises to the apical cell membrane. The protein localises to the lysosome membrane. It catalyses the reaction glycine(in) + H(+)(in) = glycine(out) + H(+)(out). It carries out the reaction L-alanine(in) + H(+)(in) = L-alanine(out) + H(+)(out). The catalysed reaction is D-alanine(in) + H(+)(in) = D-alanine(out) + H(+)(out). The enzyme catalyses L-proline(out) + H(+)(out) = L-proline(in) + H(+)(in). It catalyses the reaction D-proline(out) + H(+)(out) = D-proline(in) + H(+)(in). It carries out the reaction D-serine(out) + H(+)(out) = D-serine(in) + H(+)(in). The catalysed reaction is L-serine(in) + H(+)(in) = L-serine(out) + H(+)(out). The enzyme catalyses 4-aminobutanoate(in) + H(+)(in) = 4-aminobutanoate(out) + H(+)(out). It catalyses the reaction beta-alanine(in) + H(+)(in) = beta-alanine(out) + H(+)(out). Electrogenic proton/amino acid symporter with selectivity for small apolar L-amino acids, their D-enantiomers and selected amino acid derivatives such as 4-aminobutanoate/GABA. May be involved in the efflux from the lysosomal compartment of neutral amino acids resulting from proteolysis. May play a role in specifying sites for exocytosis in neurons. The chain is Proton-coupled amino acid transporter 1 from Homo sapiens (Human).